We begin with the raw amino-acid sequence, 711 residues long: Transferrin-binding protein B (711 aa).

Residues 1 to 20 (MNNPLVNQAAMVLPVFLLSA) form the signal peptide. Cys-21 carries N-palmitoyl cysteine lipidation. Cys-21 carries the S-diacylglycerol cysteine lipid modification. Disordered regions lie at residues 33–58 (VDTEAPRPAPKYQDVSSEKPQAQKDQ), 79–105 (SEVKLNESDWEATGLPTKPKELPKRQK), 118–146 (DIYSSPYLTPSNHQNGSAGNGVNQPKNQA), 225–251 (SKKQGDRYSGFSGDGSEEYSNKNESTL), 370–396 (LENGAAASGSTGAAASGGAAGTSSENS), 437–492 (PKDS…GDTN), and 682–711 (TEKATATSSDGNSASSATVVFGAKRQQPVQ). Over residues 46–56 (DVSSEKPQAQK) the composition is skewed to polar residues. Residues 96–105 (KPKELPKRQK) are compositionally biased toward basic and acidic residues. The segment covering 119 to 146 (IYSSPYLTPSNHQNGSAGNGVNQPKNQA) has biased composition (polar residues). Residues 373 to 393 (GAAASGSTGAAASGGAAGTSS) show a composition bias toward low complexity. The span at 457–472 (FTRKFEHTPESDKKDA) shows a compositional bias: basic and acidic residues. 2 stretches are compositionally biased toward polar residues: residues 474 to 492 (AGTQTNGAQTASNTAGDTN) and 684 to 699 (KATATSSDGNSASSAT).

It belongs to the TbpB family. Isotype II subfamily. In terms of assembly, binds only human holo-transferrin (TF), via the TF C-terminus. Forms a large complex with TbpA and TF. Interacts via its C-terminal domain with Slam1.

It localises to the cell outer membrane. It is found in the cell surface. Neisseria acquires iron by extracting it from serum transferrin (TF) in its human host. Acts as a TF receptor and is required for TF utilization. Involved in the initial capture of TF. Helps select only those TF molecules that can be used as an iron source and concentrates them on the cell surface, maintaining the iron-loaded status of the TF C-terminal lobe until its delivery to TbpA. This is Transferrin-binding protein B (tbpB) from Neisseria meningitidis serogroup B.